Consider the following 488-residue polypeptide: NADH-quinone oxidoreductase subunit N (488 aa).

The next 14 helical transmembrane spans lie at 15 to 35, 42 to 62, 79 to 99, 108 to 128, 133 to 153, 168 to 188, 209 to 229, 243 to 263, 277 to 297, 305 to 325, 333 to 353, 376 to 396, 409 to 429, and 456 to 476; these read LALP…VDLY, GMTF…AIVA, NLAA…FAYC, LLKG…MIMA, LMTV…MVAF, FVLG…IYGA, WLLL…FGAV, PTTV…ALFV, WQPM…LAAL, MLAY…IAGT, LFYA…IILL, MALM…TVGF, VGLV…AFYY, and GLLV…DSLI.

The protein belongs to the complex I subunit 2 family. In terms of assembly, NDH-1 is composed of 14 different subunits. Subunits NuoA, H, J, K, L, M, N constitute the membrane sector of the complex.

The protein localises to the cell inner membrane. It catalyses the reaction a quinone + NADH + 5 H(+)(in) = a quinol + NAD(+) + 4 H(+)(out). Functionally, NDH-1 shuttles electrons from NADH, via FMN and iron-sulfur (Fe-S) centers, to quinones in the respiratory chain. The immediate electron acceptor for the enzyme in this species is believed to be ubiquinone. Couples the redox reaction to proton translocation (for every two electrons transferred, four hydrogen ions are translocated across the cytoplasmic membrane), and thus conserves the redox energy in a proton gradient. This Alkalilimnicola ehrlichii (strain ATCC BAA-1101 / DSM 17681 / MLHE-1) protein is NADH-quinone oxidoreductase subunit N.